Consider the following 410-residue polypeptide: Lissencephaly-1 homolog (410 aa).

Residues 7 to 39 enclose the LisH domain; it reads QQEELQLAVHAYLVEAGHAEAAAAMAKSANLGD. The stretch at 55 to 80 forms a coiled coil; sequence TTITRLQKRNMELQAEVEELRSSARA. 7 WD repeats span residues 104–143, 146–185, 188–227, 230–269, 294–333, 336–375, and 378–410; these read GHRLPITAVAIHPSFAVMASASEDASIKLWDMESGNFERS, GHTNAVNDIAYDREGNRLVSCSTDMTIKVWNMDNFTCTKT, GHDHTVSSVRFDHTGDRVFSASRDKTIKIWELATGYCLQT, GHSDWVRSIDVSADGAWICSASSDHTVRVWSVASGECKHV, MIFGSKPSAEAASKGPFVASASRDKSICLFDVSTGQHLAR, GHDNWVRATAWSRGGRYLFSVADDKTMRVWDIATKRVSKT, and AHNHFVSCIAVHAKNTHVVTGSVDLKVKVWECN.

It belongs to the WD repeat LIS1/nudF family.

Its subcellular location is the cytoplasm. The protein localises to the cytoskeleton. It localises to the microtubule organizing center. The protein resides in the centrosome. In terms of biological role, positively regulates the activity of the minus-end directed microtubule motor protein dynein. May enhance dynein-mediated microtubule sliding by targeting dynein to the microtubule plus end. Required for several dynein- and microtubule-dependent processes. This Monosiga brevicollis (Choanoflagellate) protein is Lissencephaly-1 homolog.